Reading from the N-terminus, the 299-residue chain is Ribosomal RNA small subunit methyltransferase H 1 (299 aa).

S-adenosyl-L-methionine is bound by residues 31 to 33 (GGH), D50, F76, D97, and Q104.

Belongs to the methyltransferase superfamily. RsmH family.

The protein resides in the cytoplasm. The enzyme catalyses cytidine(1402) in 16S rRNA + S-adenosyl-L-methionine = N(4)-methylcytidine(1402) in 16S rRNA + S-adenosyl-L-homocysteine + H(+). In terms of biological role, specifically methylates the N4 position of cytidine in position 1402 (C1402) of 16S rRNA. The sequence is that of Ribosomal RNA small subunit methyltransferase H 1 from Acholeplasma laidlawii (strain PG-8A).